The sequence spans 180 residues: Large ribosomal subunit protein uL5 (180 aa).

It belongs to the universal ribosomal protein uL5 family. Part of the 50S ribosomal subunit; part of the 5S rRNA/L5/L18/L25 subcomplex. Contacts the 5S rRNA and the P site tRNA. Forms a bridge to the 30S subunit in the 70S ribosome.

This is one of the proteins that bind and probably mediate the attachment of the 5S RNA into the large ribosomal subunit, where it forms part of the central protuberance. In the 70S ribosome it contacts protein S13 of the 30S subunit (bridge B1b), connecting the 2 subunits; this bridge is implicated in subunit movement. Contacts the P site tRNA; the 5S rRNA and some of its associated proteins might help stabilize positioning of ribosome-bound tRNAs. The protein is Large ribosomal subunit protein uL5 of Clostridium botulinum (strain Loch Maree / Type A3).